The primary structure comprises 259 residues: Phosphatidylglycerol--prolipoprotein diacylglyceryl transferase (259 aa).

A run of 4 helical transmembrane segments spans residues 12-32 (LSLHWYAVCILVGLLLAVYLA), 46-66 (IIDFILIAFPLAIIGARIYYV), 83-103 (IWNGGIAIYGGLITGTIVLFV), and 109-129 (VLNPIHFLDIAAPSVMLAQAI). A 1,2-diacyl-sn-glycero-3-phospho-(1'-sn-glycerol) is bound at residue Arg131. 3 helical membrane-spanning segments follow: residues 167-187 (VPTFLYESMWNLIGFVIIMVW), 194-214 (LLDGDILSFYLIWYGCGRLVI), and 226-246 (GIRVSQYVSVLLIVIAIVFIF).

Belongs to the Lgt family.

The protein localises to the cell membrane. It carries out the reaction L-cysteinyl-[prolipoprotein] + a 1,2-diacyl-sn-glycero-3-phospho-(1'-sn-glycerol) = an S-1,2-diacyl-sn-glyceryl-L-cysteinyl-[prolipoprotein] + sn-glycerol 1-phosphate + H(+). Its pathway is protein modification; lipoprotein biosynthesis (diacylglyceryl transfer). Its function is as follows. Catalyzes the transfer of the diacylglyceryl group from phosphatidylglycerol to the sulfhydryl group of the N-terminal cysteine of a prolipoprotein, the first step in the formation of mature lipoproteins. The protein is Phosphatidylglycerol--prolipoprotein diacylglyceryl transferase of Streptococcus equi subsp. zooepidemicus (strain MGCS10565).